Consider the following 169-residue polypeptide: Transcription antitermination protein NusB (169 aa).

Residues 1–19 (MAEMKKTIDNKPAPKGEKK) are compositionally biased toward basic and acidic residues. Positions 1–22 (MAEMKKTIDNKPAPKGEKKANR) are disordered.

Belongs to the NusB family.

Involved in transcription antitermination. Required for transcription of ribosomal RNA (rRNA) genes. Binds specifically to the boxA antiterminator sequence of the ribosomal RNA (rrn) operons. The chain is Transcription antitermination protein NusB from Rhodopseudomonas palustris (strain BisB18).